A 199-amino-acid chain; its full sequence is Prefoldin subunit 3 (199 aa).

Met-1 carries the N-acetylmethionine modification.

The protein belongs to the prefoldin subunit alpha family. In terms of assembly, heterohexamer of two PFD-alpha type and four PFD-beta type subunits.

Binds specifically to cytosolic chaperonin (c-CPN) and transfers target proteins to it. Binds to nascent polypeptide chain and promotes folding in an environment in which there are many competing pathways for nonnative proteins. This is Prefoldin subunit 3 (PAC10) from Saccharomyces cerevisiae (strain ATCC 204508 / S288c) (Baker's yeast).